We begin with the raw amino-acid sequence, 146 residues long: MORN repeat-containing protein 4 (146 aa).

MORN repeat units lie at residues 16–38 (YRGE…DGGT), 39–61 (YLGH…DGSR), 62–84 (YEGE…DNMT), and 85–107 (FEGE…DGSH).

In terms of assembly, interacts with MYO3A.

The protein resides in the cytoplasm. It localises to the cell projection. Its subcellular location is the filopodium tip. It is found in the stereocilium. In terms of biological role, plays a role in promoting axonal degeneration following neuronal injury by toxic insult or trauma. In Homo sapiens (Human), this protein is MORN repeat-containing protein 4 (MORN4).